A 242-amino-acid chain; its full sequence is uncharacterized protein (242 aa).

The signal sequence occupies residues 1–20; that stretch reads MTFIKGLPLMLLTISLGCNA.

The protein belongs to the periplasmic pilus chaperone family.

It is found in the periplasm. Could be required for the biogenesis of the putative YbgD fimbria. This is an uncharacterized protein from Escherichia coli (strain K12).